The sequence spans 545 residues: Chaperonin GroEL (545 aa).

ATP contacts are provided by residues 30–33 (TLGP), K51, 87–91 (DGTTT), G415, and D496. Positions 526 to 545 (PEPKAPAGGMPDMGGMGGMM) are disordered. A compositionally biased stretch (gly residues) spans 536-545 (PDMGGMGGMM).

Belongs to the chaperonin (HSP60) family. In terms of assembly, forms a cylinder of 14 subunits composed of two heptameric rings stacked back-to-back. Interacts with the co-chaperonin GroES.

The protein resides in the cytoplasm. It catalyses the reaction ATP + H2O + a folded polypeptide = ADP + phosphate + an unfolded polypeptide.. Functionally, together with its co-chaperonin GroES, plays an essential role in assisting protein folding. The GroEL-GroES system forms a nano-cage that allows encapsulation of the non-native substrate proteins and provides a physical environment optimized to promote and accelerate protein folding. This is Chaperonin GroEL from Paracoccus denitrificans (strain Pd 1222).